We begin with the raw amino-acid sequence, 349 residues long: Quinone oxidoreductase-like protein 1 (349 aa).

Belongs to the zinc-containing alcohol dehydrogenase family. Quinone oxidoreductase subfamily. Homodimer. Component of the FERRY complex composed of five subunits, TBCK, PPP1R21, FERRY3, CRYZL1 and GATD1 with a ratio of 1:2:1:2:4, respectively. Ubiquitous.

The protein resides in the early endosome. Its function is as follows. Component of the FERRY complex (Five-subunit Endosomal Rab5 and RNA/ribosome intermediary). The FERRY complex directly interacts with mRNAs and RAB5A, and functions as a RAB5A effector involved in the localization and the distribution of specific mRNAs most likely by mediating their endosomal transport. The complex recruits mRNAs and ribosomes to early endosomes through direct mRNA-interaction. The polypeptide is Quinone oxidoreductase-like protein 1 (CRYZL1) (Homo sapiens (Human)).